Reading from the N-terminus, the 259-residue chain is Translation initiation factor IF-2, chloroplastic (259 aa).

A tr-type G domain is found at 171–259; the sequence is LRAPIVAVLG…LLIIAADEGI (89 aa). Residue 180-187 participates in GTP binding; that stretch reads GHVNHGKT.

It belongs to the TRAFAC class translation factor GTPase superfamily. Classic translation factor GTPase family. IF-2 subfamily.

Its subcellular location is the plastid. It is found in the chloroplast. Its function is as follows. One of the essential components for the initiation of protein synthesis. Protects formylmethionyl-tRNA from spontaneous hydrolysis and promotes its binding to the 30S ribosomal subunits. Also involved in the hydrolysis of GTP during the formation of the 70S ribosomal complex. The polypeptide is Translation initiation factor IF-2, chloroplastic (infB) (Galdieria sulphuraria (Red alga)).